A 221-amino-acid chain; its full sequence is Enolase-phosphatase E1 (221 aa).

It belongs to the HAD-like hydrolase superfamily. MasA/MtnC family. As to quaternary structure, monomer. The cofactor is Mg(2+).

The enzyme catalyses 5-methylsulfanyl-2,3-dioxopentyl phosphate + H2O = 1,2-dihydroxy-5-(methylsulfanyl)pent-1-en-3-one + phosphate. It participates in amino-acid biosynthesis; L-methionine biosynthesis via salvage pathway; L-methionine from S-methyl-5-thio-alpha-D-ribose 1-phosphate: step 3/6. It functions in the pathway amino-acid biosynthesis; L-methionine biosynthesis via salvage pathway; L-methionine from S-methyl-5-thio-alpha-D-ribose 1-phosphate: step 4/6. In terms of biological role, bifunctional enzyme that catalyzes the enolization of 2,3-diketo-5-methylthiopentyl-1-phosphate (DK-MTP-1-P) into the intermediate 2-hydroxy-3-keto-5-methylthiopentenyl-1-phosphate (HK-MTPenyl-1-P), which is then dephosphorylated to form the acireductone 1,2-dihydroxy-3-keto-5-methylthiopentene (DHK-MTPene). This Hydrogenobaculum sp. (strain Y04AAS1) protein is Enolase-phosphatase E1.